The following is a 63-amino-acid chain: Translational regulator CsrA (63 aa).

It belongs to the CsrA/RsmA family. In terms of assembly, homodimer; the beta-strands of each monomer intercalate to form a hydrophobic core, while the alpha-helices form wings that extend away from the core.

The protein localises to the cytoplasm. In terms of biological role, a key translational regulator that binds mRNA to regulate translation initiation and/or mRNA stability. Mediates global changes in gene expression, shifting from rapid growth to stress survival by linking envelope stress, the stringent response and the catabolite repression systems. Usually binds in the 5'-UTR; binding at or near the Shine-Dalgarno sequence prevents ribosome-binding, repressing translation, binding elsewhere in the 5'-UTR can activate translation and/or stabilize the mRNA. Its function is antagonized by small RNA(s). This chain is Translational regulator CsrA, found in Haemophilus influenzae (strain 86-028NP).